The primary structure comprises 412 residues: GATOR complex protein NPRL2 (412 aa).

The protein belongs to the NPR2 family. In terms of assembly, component of the GATOR complex consisting of mio, Nup44A/Seh1, Im11, Nplr3, Nplr2, Wdr24, Wdr59 and Sec13. Within the GATOR complex, probable component of the GATOR1 subcomplex which is likely composed of Iml1, Nplr2 and Nplr3. Interacts with Nprl3.

It is found in the cytoplasm. The protein resides in the lysosome. Functionally, an essential component of the GATOR subcomplex GATOR1 which functions as an inhibitor of the amino acid-sensing branch of the TORC1 signaling pathway. The two GATOR subcomplexes, GATOR1 and GATOR2, regulate the TORC1 pathway in order to mediate metabolic homeostasis, female gametogenesis and the response to amino acid limitation and complete starvation. The function of GATOR1 in negatively regulating the TORC1 pathway is essential for maintaining baseline levels of TORC1 activity under nutrient rich conditions, and for promoting survival during amino acid or complete starvation by inhibiting TORC1-dependent cell growth and promoting catabolic metabolism and autophagy. In addition, this inhibition of TORC1 is necessary to maintain female fertility under normal conditions and during periods of nutrient stress. GATOR1 and GATOR2 act at different stages of oogenesis to regulate TORC1 in order to control meiotic entry and promote oocyte growth and development. After exactly four mitotic cyst divisions, the GATOR1 complex members (Iml1, Nprl2 and Nprl3) down-regulate TORC1 to slow cellular metabolism and promote the mitotic/meiotic transition. At later stages of oogenesis, the mio and Nup44A components of the GATOR2 complex inhibit GATOR1 and thus activate TORC1 to promote meiotic progression, and drive oocyte growth and development. The protein is GATOR complex protein NPRL2 of Drosophila melanogaster (Fruit fly).